The following is an 88-amino-acid chain: Probable oxaloacetate decarboxylase gamma chain (88 aa).

The helical transmembrane segment at leucine 13–valine 35 threads the bilayer.

It belongs to the OadG family. Heterotrimer of an alpha, a beta and a gamma subunit. Na(+) serves as cofactor.

Its subcellular location is the cell membrane. The enzyme catalyses oxaloacetate + 2 Na(+)(in) + H(+) = pyruvate + 2 Na(+)(out) + CO2. Its function is as follows. Catalyzes the decarboxylation of oxaloacetate coupled to Na(+) translocation. This is Probable oxaloacetate decarboxylase gamma chain from Mannheimia succiniciproducens (strain KCTC 0769BP / MBEL55E).